A 278-amino-acid polypeptide reads, in one-letter code: Elongation factor Ts (278 aa).

Positions 82 to 85 (TDFV) are involved in Mg(2+) ion dislocation from EF-Tu.

This sequence belongs to the EF-Ts family.

It localises to the cytoplasm. In terms of biological role, associates with the EF-Tu.GDP complex and induces the exchange of GDP to GTP. It remains bound to the aminoacyl-tRNA.EF-Tu.GTP complex up to the GTP hydrolysis stage on the ribosome. The sequence is that of Elongation factor Ts from Streptomyces avermitilis (strain ATCC 31267 / DSM 46492 / JCM 5070 / NBRC 14893 / NCIMB 12804 / NRRL 8165 / MA-4680).